Here is a 75-residue protein sequence, read N- to C-terminus: Dermaseptin-SP4 (75 aa).

A signal peptide spans 1–22; that stretch reads MAFLKKSLFLVLFLGLVSLSMC. Residues 23–45 constitute a propeptide that is removed on maturation; the sequence is EEEKRENEVEEEQEDDEQSELRR. Proline 72 carries the proline amide modification. Residues 74–75 constitute a propeptide that is removed on maturation; sequence EQ.

Belongs to the frog skin active peptide (FSAP) family. Dermaseptin subfamily. Expressed by the skin glands.

Its subcellular location is the secreted. It is found in the target cell membrane. In terms of biological role, antimicrobial peptide with activity against Gram-positive and Gram-negative bacteria and fungi. Has been tested against E.coli (MIC=47.25-128 uM), S.aureus (MIC=189-512 uM), K.pneumoniae (MIC=189 uM) and C.albicans (MIC&gt;189 uM). Probably acts by disturbing membrane functions with its alpha-helical amphipathic structure. May penetrate bacterial membranes, but stay at the mammalian membrane surface. Shows a weak hemolytic activity. This chain is Dermaseptin-SP4, found in Agalychnis spurrelli (Gliding leaf frog).